The following is a 1222-amino-acid chain: Serine/threonine-protein kinase WNK4 (1222 aa).

Residues 1-17 show a composition bias toward polar residues; it reads MLAPRNTETGVPMSQTE. Positions 1 to 165 are disordered; sequence MLAPRNTETG…DTETQAVATS (165 aa). Low complexity predominate over residues 90 to 101; sequence AGPTRSPPSSSK. Position 95 is a phosphoserine (S95). Basic and acidic residues predominate over residues 135–152; it reads EPPRVPDAAARERRREQE. Residues K154 and K172 each participate in a glycyl lysine isopeptide (Lys-Gly) (interchain with G-Cter in ubiquitin) cross-link. One can recognise a Protein kinase domain in the interval 171–429; sequence LKFDIEIGRG…IQDLLAHAFF (259 aa). S181 lines the ATP pocket. Glycyl lysine isopeptide (Lys-Gly) (interchain with G-Cter in ubiquitin) cross-links involve residues K183, K223, and K238. ATP is bound by residues 251–254 and K301; that span reads TELM. The Proton acceptor role is filled by D318. A Glycyl lysine isopeptide (Lys-Gly) (interchain with G-Cter in ubiquitin) cross-link involves residue K325. Phosphoserine; by autocatalysis is present on residues S328 and S332. Glycyl lysine isopeptide (Lys-Gly) (interchain with G-Cter in ubiquitin) cross-links involve residues K384, K390, K447, and K451. Residues 525–562 form a disordered region; that stretch reads RELEVLPPDSGPPPATVSLAPGPPSAFPPEPEEPEADQ. Residues 533-553 are compositionally biased toward pro residues; that stretch reads DSGPPPATVSLAPGPPSAFPP. The tract at residues 554–564 is interaction with KLHL3; the sequence is EPEEPEADQHQ. S572 is subject to Phosphoserine. Disordered stretches follow at residues 626–659, 747–809, 877–896, and 927–976; these read RSGPGSDFSPGDSYASDAASGLSDMGEGGQMRKN, DAGP…GAPF, SYPQDPLSPTSLPVCPSPPS, and SPGL…AQPL. Composition is skewed to low complexity over residues 627–638, 757–769, 793–807, and 877–890; these read SGPGSDFSPGDS, ALSPQEEPAALPA, STSPSSPGTPLSPGA, and SYPQDPLSPTSLPV. Pro residues predominate over residues 935–944; it reads PPAPPGPLPS. Over residues 953 to 963 the composition is skewed to polar residues; the sequence is DQESLSAQTAE. Residue K990 forms a Glycyl lysine isopeptide (Lys-Gly) (interchain with G-Cter in ubiquitin) linkage. Positions 996–999 match the RFXV motif motif; it reads RFQV. Residues 1000 to 1087 form a disordered region; it reads TSSKEPAEPP…SSPILSHPSP (88 aa). S1014 bears the Phosphoserine mark. Residues 1014–1032 show a composition bias toward low complexity; it reads SPTLSRSLKLPSPPLTSES. Basic and acidic residues predominate over residues 1044 to 1056; it reads ETREALAESDRAA. Residues K1123, K1136, and K1137 each participate in a glycyl lysine isopeptide (Lys-Gly) (interchain with G-Cter in ubiquitin) cross-link. A disordered region spans residues 1166–1222; the sequence is RRLSKGSFPTSRRNSLQRSDLPGPGIMRRNSLSGSSTGSQEQRASKGVTFAGDIGRM. 2 stretches are compositionally biased toward polar residues: residues 1172 to 1183 and 1195 to 1207; these read SFPTSRRNSLQR and NSLSGSSTGSQEQ. Position 1196 is a phosphoserine (S1196).

This sequence belongs to the protein kinase superfamily. Ser/Thr protein kinase family. WNK subfamily. In terms of assembly, interacts with the C-terminal region of KCNJ1. Interacts with WNK1 and WNK3. Interacts with KLHL3. Mg(2+) is required as a cofactor. In terms of processing, autophosphorylated at Ser-328 and Ser-332, promoting its activation. Phosphorylated by WNK1 and WNK3. Phosphorylated at Ser-572 in a MAP3K15/ASK3-dependent process in response to osmotic stress or hypotonic low-chloride stimulation. Ubiquitinated by the BCR(KLHL3) complex, leading to its degradation. Also ubiquitinated by the BCR(KLHL2) complex. As to expression, locates to the distal convoluted tubule, the medullary collecting duct and the cortical collecting duct of the kidney. Expressed in pancreatic duct.

It is found in the cell junction. It localises to the tight junction. The catalysed reaction is L-seryl-[protein] + ATP = O-phospho-L-seryl-[protein] + ADP + H(+). It catalyses the reaction L-threonyl-[protein] + ATP = O-phospho-L-threonyl-[protein] + ADP + H(+). Activation requires autophosphorylation of Ser-328 and Ser-332. Autophosphorylation and subsequent activation is inhibited by increases in intracellular ionic strength: Cl(-) potently inhibits WNK4 kinase activity via direct binding. Also inhibited by K(+) ions. Functionally, serine/threonine-protein kinase component of the WNK4-SPAK/OSR1 kinase cascade, which acts as a key regulator of ion transport in the distal nephron and blood pressure. The WNK4-SPAK/OSR1 kinase cascade is composed of WNK4, which mediates phosphorylation and activation of downstream kinases OXSR1/OSR1 and STK39/SPAK. Following activation, OXSR1/OSR1 and STK39/SPAK catalyze phosphorylation of ion cotransporters, such as SLC12A1/NKCC2, SLC12A2/NKCC1, SLC12A3/NCC, SLC12A5/KCC2 or SLC12A6/KCC3, regulating their activity. Acts as a molecular switch that regulates the balance between renal salt reabsorption and K(+) secretion by modulating the activities of renal transporters and channels, including the Na-Cl cotransporter SLC12A3/NCC and the K(+) channel, KCNJ1/ROMK. Regulates NaCl reabsorption in the distal nephron by activating the thiazide-sensitive Na-Cl cotransporter SLC12A3/NCC in distal convoluted tubule cells of kidney: activates SLC12A3/NCC in a OXSR1/OSR1- and STK39/SPAK-dependent process. Also acts as a scaffold protein independently of its protein kinase activity: negatively regulates cell membrane localization of various transporters and channels (CFTR, KCNJ1/ROMK, SLC4A4, SLC26A9 and TRPV4) by clathrin-dependent endocytosis. Also inhibits the activity of the epithelial Na(+) channel (ENaC) SCNN1A, SCNN1B, SCNN1D in a inase-independent mechanism. May also phosphorylate NEDD4L. This Mus musculus (Mouse) protein is Serine/threonine-protein kinase WNK4.